The following is a 355-amino-acid chain: Erythronate-4-phosphate dehydrogenase (355 aa).

2 residues coordinate substrate: Ser45 and Thr66. NAD(+) is bound at residue Asp146. The active site involves Arg206. Asp229 provides a ligand contact to NAD(+). The active site involves Glu234. His251 (proton donor) is an active-site residue. Gly254 provides a ligand contact to NAD(+). Residue Tyr255 coordinates substrate.

Belongs to the D-isomer specific 2-hydroxyacid dehydrogenase family. PdxB subfamily. As to quaternary structure, homodimer.

It localises to the cytoplasm. It carries out the reaction 4-phospho-D-erythronate + NAD(+) = (R)-3-hydroxy-2-oxo-4-phosphooxybutanoate + NADH + H(+). The protein operates within cofactor biosynthesis; pyridoxine 5'-phosphate biosynthesis; pyridoxine 5'-phosphate from D-erythrose 4-phosphate: step 2/5. Catalyzes the oxidation of erythronate-4-phosphate to 3-hydroxy-2-oxo-4-phosphonooxybutanoate. The polypeptide is Erythronate-4-phosphate dehydrogenase (Acinetobacter baumannii (strain ACICU)).